Consider the following 338-residue polypeptide: Methionine import ATP-binding protein MetN 2 (338 aa).

Residues 2 to 242 form the ABC transporter domain; sequence IEIEKVCVDF…PQHAFTQQLV (241 aa). 39-46 provides a ligand contact to ATP; that stretch reads GTSGAGKS.

This sequence belongs to the ABC transporter superfamily. Methionine importer (TC 3.A.1.24) family. In terms of assembly, the complex is composed of two ATP-binding proteins (MetN), two transmembrane proteins (MetI) and a solute-binding protein (MetQ).

It is found in the cell inner membrane. It catalyses the reaction L-methionine(out) + ATP + H2O = L-methionine(in) + ADP + phosphate + H(+). It carries out the reaction D-methionine(out) + ATP + H2O = D-methionine(in) + ADP + phosphate + H(+). Functionally, part of the ABC transporter complex MetNIQ involved in methionine import. Responsible for energy coupling to the transport system. This Salmonella typhi protein is Methionine import ATP-binding protein MetN 2.